The primary structure comprises 255 residues: Small ribosomal subunit protein uS2 (255 aa).

Positions 231 to 255 (RLQTGAEEEFSTEGEEVVEETPAEA) are disordered. Residues 236–255 (AEEEFSTEGEEVVEETPAEA) show a composition bias toward acidic residues.

This sequence belongs to the universal ribosomal protein uS2 family.

The chain is Small ribosomal subunit protein uS2 from Citrifermentans bemidjiense (strain ATCC BAA-1014 / DSM 16622 / JCM 12645 / Bem) (Geobacter bemidjiensis).